A 402-amino-acid polypeptide reads, in one-letter code: N-acetyltransferase Eis (402 aa).

The region spanning 3–154 (VTLCSPTEDD…RFARFHADAP (152 aa)) is the N-acetyltransferase domain. Acetyl-CoA contacts are provided by residues 85-87 (VAV), 93-98 (RRGLLR), and 121-122 (SE). The active-site Proton donor is tyrosine 126. Phenylalanine 402 functions as the Proton acceptor; via carboxylate in the catalytic mechanism.

The protein belongs to the acetyltransferase Eis family. As to quaternary structure, homohexamer; trimer of dimers.

It localises to the secreted. Its subcellular location is the host cytoplasmic vesicle. It is found in the host phagosome. The protein localises to the extracellular vesicle. The protein resides in the bacterial extracellular vesicle. It localises to the host extracellular space. It catalyses the reaction L-lysyl-[protein] + acetyl-CoA = N(6)-acetyl-L-lysyl-[protein] + CoA + H(+). Its function is as follows. Effector that is released into the host cell and affects host immune responses. Acts as an acetyltransferase that acetylates lysine residues of host proteins. The polypeptide is N-acetyltransferase Eis (Mycobacterium bovis (strain BCG / Pasteur 1173P2)).